Here is a 181-residue protein sequence, read N- to C-terminus: Large ribosomal subunit protein uL5c (181 aa).

Belongs to the universal ribosomal protein uL5 family. In terms of assembly, part of the 50S ribosomal subunit; contacts the 5S rRNA.

The protein resides in the plastid. Its function is as follows. Binds 5S rRNA, forms part of the central protuberance of the 50S subunit. The chain is Large ribosomal subunit protein uL5c (rpl5) from Helicosporidium sp. subsp. Simulium jonesii (Green alga).